The primary structure comprises 124 residues: Small ribosomal subunit protein uS12 (124 aa).

Position 89 is a 3-methylthioaspartic acid (Asp89).

The protein belongs to the universal ribosomal protein uS12 family. In terms of assembly, part of the 30S ribosomal subunit. Contacts proteins S8 and S17. May interact with IF1 in the 30S initiation complex.

In terms of biological role, with S4 and S5 plays an important role in translational accuracy. Interacts with and stabilizes bases of the 16S rRNA that are involved in tRNA selection in the A site and with the mRNA backbone. Located at the interface of the 30S and 50S subunits, it traverses the body of the 30S subunit contacting proteins on the other side and probably holding the rRNA structure together. The combined cluster of proteins S8, S12 and S17 appears to hold together the shoulder and platform of the 30S subunit. This is Small ribosomal subunit protein uS12 from Klebsiella pneumoniae (strain 342).